The primary structure comprises 217 residues: Protein 33K (217 aa).

A disordered region spans residues 1–142; sequence MPPKGNKQAI…KEKTSAIATR (142 aa). Residues 24–68 are compositionally biased toward acidic residues; sequence QWDEEEESWDDSQAEEVSDEEEMESWESLDEELEDKPPKDEEEEI. Residues 69-78 are compositionally biased toward low complexity; the sequence is IASAAAPSSK. Over residues 123–136 the composition is skewed to basic and acidic residues; sequence KRSEKTTRPRKEKT. Residues 160–187 form a necessary for nuclear subcellular location region; that stretch reads YAIFQQSRGQQLELKVKNRSLRSLTRSC. Residues 166 to 186 form an RS-repeat; required for splicing enhancer activity region; sequence SRGQQLELKVKNRSLRSLTRS.

This sequence belongs to the adenoviridae splicing factor family. Homooligomer. Interacts with DBP; this interaction occurs at a unique vertex during genome packaging. Interacts with IVa2; this interaction occurs at a unique vertex during genome packaging and seems to potentiate IVa2 and 33K oligomerization. Phosphorylated in vitro by human PKA and PRKDC. PRKDC inhibits, whereas PKA activates the splicing factor.

It is found in the host nucleus. Promotes alternative splicing of late transcripts by promoting splicing at weak 3' splice sites. Required for the temporal activation of major late pre-mRNA splicing at late times of infection. Induces the splicing and expression of the late capsid vertex protein. Its function is as follows. Probably functions as the small terminase that is part of the molecular motor that translocates genomic DNA in empty capsid during DNA packaging. This motor is located at a unique vertex and comprises at least the IVa2 ATPase, the small terminase 33K and probably a portal. Forms a ring-like structure of about 17 nm in which genomic DNA is translocated into the capsid. Stimulates IVa2 ATPase activity in the presence of the viral genome. Once the DNA is packaged, the terminase detaches: the 33K protein is present in the empty particles, but not in the mature virions. Also involved in virion assembly. This Human adenovirus F serotype 41 (HAdV-41) protein is Protein 33K.